The following is a 319-amino-acid chain: Acetyl-coenzyme A carboxylase carboxyl transferase subunit alpha (319 aa).

The CoA carboxyltransferase C-terminal domain occupies 35–296 (DLDKEIEQLE…KDMLVKQLEE (262 aa)).

Belongs to the AccA family. Acetyl-CoA carboxylase is a heterohexamer composed of biotin carboxyl carrier protein (AccB), biotin carboxylase (AccC) and two subunits each of ACCase subunit alpha (AccA) and ACCase subunit beta (AccD).

Its subcellular location is the cytoplasm. The enzyme catalyses N(6)-carboxybiotinyl-L-lysyl-[protein] + acetyl-CoA = N(6)-biotinyl-L-lysyl-[protein] + malonyl-CoA. Its pathway is lipid metabolism; malonyl-CoA biosynthesis; malonyl-CoA from acetyl-CoA: step 1/1. Its function is as follows. Component of the acetyl coenzyme A carboxylase (ACC) complex. First, biotin carboxylase catalyzes the carboxylation of biotin on its carrier protein (BCCP) and then the CO(2) group is transferred by the carboxyltransferase to acetyl-CoA to form malonyl-CoA. This is Acetyl-coenzyme A carboxylase carboxyl transferase subunit alpha from Vibrio atlanticus (strain LGP32) (Vibrio splendidus (strain Mel32)).